The chain runs to 313 residues: Intelectin-1a (313 aa).

The signal sequence occupies residues 1–18; that stretch reads MTQLGFLLFIMVATRGCS. The region spanning 32 to 251 is the Fibrinogen C-terminal domain; it reads SFFSSLPRSC…NNERAASALC (220 aa). Cys-41 and Cys-70 form a disulfide bridge. His-86, Glu-87, Asn-89, Gly-92, Gly-97, Asp-98, and Asp-133 together coordinate Ca(2+). 3 disulfide bridges follow: Cys-94-Cys-280, Cys-199-Cys-259, and Cys-251-Cys-265. Asn-260, Glu-262, Glu-274, and Asp-282 together coordinate Ca(2+). Residues 262–263 and Glu-274 contribute to the a carbohydrate site; that span reads EH. Ser-298 carries the GPI-anchor amidated serine lipid modification. A propeptide spanning residues 299-313 is cleaved from the precursor; that stretch reads SSRKITEAAVLLFYR.

Monomer. May interact with LTF. Expressed in small intestinal Paneth cells in uninfected mice. Expression also detected in various other tissues including stomach, kidney, ovary and brain.

The protein resides in the cell membrane. The protein localises to the secreted. In terms of biological role, lectin that specifically recognizes microbial carbohydrate chains in a calcium-dependent manner. Binds to microbial glycans that contain a terminal acyclic 1,2-diol moiety, including beta-linked D-galactofuranose (beta-Galf), D-phosphoglycerol-modified glycans, D-glycero-D-talo-oct-2-ulosonic acid (KO) and 3-deoxy-D-manno-oct-2-ulosonic acid (KDO). Binds to glycans from Gram-positive and Gram-negative bacteria, including K.pneumoniae, S.pneumoniae, Y.pestis, P.mirabilis and P.vulgaris. Does not bind mammalian glycans. Probably plays a role in the defense system against microorganisms. May function as adipokine that has no effect on basal glucose uptake but enhances insulin-stimulated glucose uptake in adipocytes. Increases AKT phosphorylation in the absence and presence of insulin. May interact with lactoferrin/LTF and increase its uptake, and may thereby play a role in iron absorption. The protein is Intelectin-1a (Itln1) of Mus musculus (Mouse).